The primary structure comprises 888 residues: DNA mismatch repair protein MutS (888 aa).

ATP is bound at residue 641–648; it reads GPNMAGKS.

The protein belongs to the DNA mismatch repair MutS family.

Functionally, this protein is involved in the repair of mismatches in DNA. It is possible that it carries out the mismatch recognition step. This protein has a weak ATPase activity. The chain is DNA mismatch repair protein MutS from Rickettsia bellii (strain RML369-C).